Consider the following 451-residue polypeptide: Tubulin alpha chain (451 aa).

Residue glutamine 11 coordinates GTP. Lysine 40 carries the N6-acetyllysine modification. Residues glutamate 71, glycine 144, threonine 145, threonine 179, asparagine 206, and asparagine 228 each contribute to the GTP site. A Mg(2+)-binding site is contributed by glutamate 71. Glutamate 254 is an active-site residue.

This sequence belongs to the tubulin family. Dimer of alpha and beta chains. A typical microtubule is a hollow water-filled tube with an outer diameter of 25 nm and an inner diameter of 15 nM. Alpha-beta heterodimers associate head-to-tail to form protofilaments running lengthwise along the microtubule wall with the beta-tubulin subunit facing the microtubule plus end conferring a structural polarity. Microtubules usually have 13 protofilaments but different protofilament numbers can be found in some organisms and specialized cells. It depends on Mg(2+) as a cofactor. Undergoes a tyrosination/detyrosination cycle, the cyclic removal and re-addition of a C-terminal tyrosine residue by the enzymes tubulin tyrosine carboxypeptidase (TTCP) and tubulin tyrosine ligase (TTL), respectively. In terms of processing, acetylation of alpha chains at Lys-40 stabilizes microtubules and affects affinity and processivity of microtubule motors. This modification has a role in multiple cellular functions, ranging from cell motility, cell cycle progression or cell differentiation to intracellular trafficking and signaling.

The protein resides in the cytoplasm. It localises to the cytoskeleton. The catalysed reaction is GTP + H2O = GDP + phosphate + H(+). Functionally, tubulin is the major constituent of microtubules, a cylinder consisting of laterally associated linear protofilaments composed of alpha- and beta-tubulin heterodimers. Microtubules grow by the addition of GTP-tubulin dimers to the microtubule end, where a stabilizing cap forms. Below the cap, tubulin dimers are in GDP-bound state, owing to GTPase activity of alpha-tubulin. This chain is Tubulin alpha chain, found in Trypanosoma cruzi.